Here is a 176-residue protein sequence, read N- to C-terminus: Interleukin-7 (176 aa).

The signal sequence occupies residues 1–25; it reads MFHVSFRYIFGIPPLILVLLPVASS. 3 cysteine pairs are disulfide-bonded: Cys-27/Cys-165, Cys-58/Cys-153, and Cys-71/Cys-116. Asn-94, Asn-115, and Asn-140 each carry an N-linked (GlcNAc...) asparagine glycan.

This sequence belongs to the IL-7/IL-9 family.

The protein resides in the secreted. Its function is as follows. Hematopoietic growth factor capable of stimulating the proliferation of lymphoid progenitors. It is important for proliferation during certain stages of B-cell maturation. This chain is Interleukin-7 (IL7), found in Sus scrofa (Pig).